Consider the following 276-residue polypeptide: BES1/BZR1 homolog protein 1 (276 aa).

Disordered stretches follow at residues 1–30 (MTAS…RERR), 76–125 (TTYR…PTRF), and 155–191 (SAPV…PTRR). Residues 14–87 (RMPTWKEREN…YRKGSRPTET (74 aa)) are required for DNA-binding. Over residues 84–103 (PTETTVPCSSIQLSPQSSAF) the composition is skewed to polar residues. The segment covering 104–122 (QSPIPSYQASPSSSSYPSP) has biased composition (low complexity). At threonine 159 the chain carries Phosphothreonine. Positions 164 to 174 (SPRRSNPRLPR) are enriched in low complexity. Polar residues predominate over residues 175–189 (WQSSNFPVSAPSSPT).

It belongs to the BZR/LAT61 family. Post-translationally, phosphorylated. Phosphorylation increases protein degradation.

This is BES1/BZR1 homolog protein 1 (BEH1) from Arabidopsis thaliana (Mouse-ear cress).